A 103-amino-acid polypeptide reads, in one-letter code: ATP synthase F(0) complex subunit g, mitochondrial (103 aa).

Ala-2 carries the post-translational modification N-acetylalanine. Residues Lys-11, Lys-24, Lys-35, and Lys-54 each carry the N6-acetyllysine modification.

Belongs to the ATPase g subunit family. As to quaternary structure, component of the ATP synthase complex composed at least of ATP5F1A/subunit alpha, ATP5F1B/subunit beta, ATP5MC1/subunit c (homooctomer), MT-ATP6/subunit a, MT-ATP8/subunit 8, ATP5ME/subunit e, ATP5MF/subunit f, ATP5MG/subunit g, ATP5MK/subunit k, ATP5MJ/subunit j, ATP5F1C/subunit gamma, ATP5F1D/subunit delta, ATP5F1E/subunit epsilon, ATP5PF/subunit F6, ATP5PB/subunit b, ATP5PD/subunit d, ATP5PO/subunit OSCP. ATP synthase complex consists of a soluble F(1) head domain (subunits alpha(3) and beta(3)) - the catalytic core - and a membrane F(0) domain - the membrane proton channel (subunits c, a, 8, e, f, g, k and j). These two domains are linked by a central stalk (subunits gamma, delta, and epsilon) rotating inside the F1 region and a stationary peripheral stalk (subunits F6, b, d, and OSCP).

It is found in the mitochondrion. The protein localises to the mitochondrion inner membrane. Subunit g, of the mitochondrial membrane ATP synthase complex (F(1)F(0) ATP synthase or Complex V) that produces ATP from ADP in the presence of a proton gradient across the membrane which is generated by electron transport complexes of the respiratory chain. ATP synthase complex consist of a soluble F(1) head domain - the catalytic core - and a membrane F(1) domain - the membrane proton channel. These two domains are linked by a central stalk rotating inside the F(1) region and a stationary peripheral stalk. During catalysis, ATP synthesis in the catalytic domain of F(1) is coupled via a rotary mechanism of the central stalk subunits to proton translocation. In vivo, can only synthesize ATP although its ATP hydrolase activity can be activated artificially in vitro. Part of the complex F(0) domain. The sequence is that of ATP synthase F(0) complex subunit g, mitochondrial from Pongo abelii (Sumatran orangutan).